The chain runs to 218 residues: NAD(P)H-quinone oxidoreductase subunit I (218 aa).

4Fe-4S ferredoxin-type domains lie at glycine 55–valine 84 and arginine 95–glutamate 124. Positions 64, 67, 70, 74, 104, 107, 110, and 114 each coordinate [4Fe-4S] cluster. The segment at methionine 169 to glycine 218 is disordered. The segment covering glutamine 208–glycine 218 has biased composition (polar residues).

The protein belongs to the complex I 23 kDa subunit family. As to quaternary structure, NDH-1 is composed of at least 11 different subunits. It depends on [4Fe-4S] cluster as a cofactor.

It is found in the cellular thylakoid membrane. The enzyme catalyses a plastoquinone + NADH + (n+1) H(+)(in) = a plastoquinol + NAD(+) + n H(+)(out). It catalyses the reaction a plastoquinone + NADPH + (n+1) H(+)(in) = a plastoquinol + NADP(+) + n H(+)(out). NDH-1 shuttles electrons from an unknown electron donor, via FMN and iron-sulfur (Fe-S) centers, to quinones in the respiratory and/or the photosynthetic chain. The immediate electron acceptor for the enzyme in this species is believed to be plastoquinone. Couples the redox reaction to proton translocation, and thus conserves the redox energy in a proton gradient. This is NAD(P)H-quinone oxidoreductase subunit I from Prochlorococcus marinus (strain MIT 9313).